Here is an 83-residue protein sequence, read N- to C-terminus: MNNNAQPDVSALSFEQAVEELERIVSALERGDVALDKSIEIYERGEALKKHCEALLKAAEDRIEKIRLDRAGRPQGVEPLDAE.

Belongs to the XseB family. In terms of assembly, heterooligomer composed of large and small subunits.

Its subcellular location is the cytoplasm. It carries out the reaction Exonucleolytic cleavage in either 5'- to 3'- or 3'- to 5'-direction to yield nucleoside 5'-phosphates.. Its function is as follows. Bidirectionally degrades single-stranded DNA into large acid-insoluble oligonucleotides, which are then degraded further into small acid-soluble oligonucleotides. In Rhizobium meliloti (strain 1021) (Ensifer meliloti), this protein is Exodeoxyribonuclease 7 small subunit.